Reading from the N-terminus, the 105-residue chain is Vitelline membrane protein Vm32E (105 aa).

An N-terminal signal peptide occupies residues 1-17 (MHFIALIVAVCVAFAGA). Residues 25–62 (GIAAPPCPKNYLFSCQPNLVPAPCAQEAASYGSAGAYA) enclose the VM domain.

Belongs to the vitelline membrane family.

The protein localises to the secreted. Its function is as follows. Major early eggshell protein. This chain is Vitelline membrane protein Vm32E, found in Drosophila ananassae (Fruit fly).